The chain runs to 202 residues: Kunitz-type protein bli-5 (202 aa).

A signal peptide spans 1 to 20; it reads MVSIHNSFILLMLMISICFC. The 50-residue stretch at 135-184 folds into the BPTI/Kunitz inhibitor domain; the sequence is CVHPIFDHPDDGYLSRWGFDGEQCIEFKWNPERPSSANNFKTRAHCEDYC. Disulfide bonds link cysteine 135-cysteine 184 and cysteine 158-cysteine 180.

As to expression, expressed in larval and adult hypodermis, hermaphrodite vulva and adult excretory cell and duct.

In terms of biological role, appears to lack serine protease inhibitor activity in vitro when tested with bovine pancreatic alpha-chymotrypsin and elastase. Involved in cuticle biosynthesis. The polypeptide is Kunitz-type protein bli-5 (Caenorhabditis elegans).